A 318-amino-acid polypeptide reads, in one-letter code: Ubiquitin-like domain-containing CTD phosphatase 1 (318 aa).

The region spanning 3–81 (LSLIIKWGGQ…IMMMGTREES (79 aa)) is the Ubiquitin-like domain. The FCP1 homology domain maps to 133 to 294 (PREGKKLLVL…VKLSQYLKEI (162 aa)). Aspartate 143, aspartate 145, and aspartate 253 together coordinate Mg(2+).

It depends on Mg(2+) as a cofactor.

The protein localises to the nucleus. It carries out the reaction O-phospho-L-seryl-[protein] + H2O = L-seryl-[protein] + phosphate. The catalysed reaction is O-phospho-L-threonyl-[protein] + H2O = L-threonyl-[protein] + phosphate. Functionally, dephosphorylates 26S nuclear proteasomes, thereby decreasing their proteolytic activity. Recruited to the 19S regulatory particle of the 26S proteasome where it dephosphorylates 19S component psmc2 which impairs psmc2 ATPase activity and disrupts 26S proteasome assembly. Has also been reported to stimulate the proteolytic activity of the 26S proteasome. In Xenopus laevis (African clawed frog), this protein is Ubiquitin-like domain-containing CTD phosphatase 1 (ublcp1).